Here is a 382-residue protein sequence, read N- to C-terminus: MNTNKRVLILTANYGNGHVQVAKTLYEQCVRLGFQHVTVSNLYQESNPIVSEVTQYLYLKSFSIGKQFYRLFYYGVDKIYNKRKFNIYFKMGNKRLGELVDEHQPDIIINTFPMIVVPEYRRRTGRVIPTFNVMTDFCLHKIWVHENVDKYYVATDYVKEKLLEIGTHPSNVKITGIPIRPQFEESMPVGPIYKKYNLSPNKKVLLIMAGAHGVLKNVKELCENLVKDDQVQVVVVCGKNTALKESLSALEAENGDKLKVLGYVERIDELFRITDCMITKPGGITLTEATAIGVPVILYKPVPGQEKENANFFEDRGAAIVVNRHEEILESVTSLLADEDTLHRMKKNIKDLHLANSSEVILEDILKESEMMTAKQKAKVLS.

The protein belongs to the glycosyltransferase 28 family. UgtP subfamily.

It is found in the cell membrane. The catalysed reaction is a 1,2-diacyl-3-O-(beta-D-glucopyranosyl)-sn-glycerol + UDP-alpha-D-glucose = a 1,2-diacyl-3-O-(beta-D-Glc-(1-&gt;6)-beta-D-Glc)-sn-glycerol + UDP + H(+). It catalyses the reaction a 1,2-diacyl-3-O-(beta-D-Glc-(1-&gt;6)-beta-D-Glc)-sn-glycerol + UDP-alpha-D-glucose = a 1,2-diacyl-3-O-(beta-D-Glc-(1-&gt;6)-beta-D-Glc-(1-&gt;6)-beta-D-Glc)-sn-glycerol + UDP + H(+). The enzyme catalyses a 1,2-diacyl-sn-glycerol + UDP-alpha-D-glucose = a 1,2-diacyl-3-O-(beta-D-glucopyranosyl)-sn-glycerol + UDP + H(+). The protein operates within glycolipid metabolism; diglucosyl-diacylglycerol biosynthesis. Its function is as follows. Processive glucosyltransferase involved in the biosynthesis of both the bilayer- and non-bilayer-forming membrane glucolipids. Is able to successively transfer up to three glucosyl residues to diacylglycerol (DAG), thereby catalyzing the formation of beta-monoglucosyl-DAG (3-O-(beta-D-glucopyranosyl)-1,2-diacyl-sn-glycerol), beta-diglucosyl-DAG (3-O-(beta-D-glucopyranosyl-beta-(1-&gt;6)-D-glucopyranosyl)-1,2-diacyl-sn-glycerol) and beta-triglucosyl-DAG (3-O-(beta-D-glucopyranosyl-beta-(1-&gt;6)-D-glucopyranosyl-beta-(1-&gt;6)-D-glucopyranosyl)-1,2-diacyl-sn-glycerol). Beta-diglucosyl-DAG is the predominant glycolipid found in Bacillales and is also used as a membrane anchor for lipoteichoic acid (LTA). Also seems to be able to form beta-tetraglucosyl-DAG, although this glycolipid has not been found in B.subtilis membrane. UgtP can only use UDP-glucose as sugar donor. In Bacillus subtilis (strain 168), this protein is Processive diacylglycerol beta-glucosyltransferase.